Reading from the N-terminus, the 1185-residue chain is Chromosome partition protein Smc (1185 aa).

34–41 provides a ligand contact to ATP; the sequence is PNGSGKSN. 2 coiled-coil regions span residues 174–376 and 412–526; these read WRRS…EKDI and ENIV…KLDV. An SMC hinge domain is found at 534-644; it reads VGEIISLQKK…CENIDNAFEI (111 aa). Residues 679–1039 are a coiled coil; the sequence is NIIGRKREIE…IDAMTEKMKG (361 aa).

The protein belongs to the SMC family. Homodimer.

The protein resides in the cytoplasm. Required for chromosome condensation and partitioning. The polypeptide is Chromosome partition protein Smc (Clostridium kluyveri (strain NBRC 12016)).